The following is an 815-amino-acid chain: Protein-glutamine gamma-glutamyltransferase K (815 aa).

Disordered regions lie at residues 1–40 (MDGPRSDVGRWGGNPWQPPTTPSPEPEPEPEPERRSRRGG) and 59–100 (DDWG…AAGD). Pro residues predominate over residues 16 to 25 (WQPPTTPSPE). Position 21 is a phosphothreonine (threonine 21). Phosphoserine occurs at positions 23, 80, 83, 90, and 93. Residues 59–87 (DDWGPEPHRDRGSGSGRRRPDSRGSDSRR) show a composition bias toward basic and acidic residues. Residues cysteine 375, histidine 434, and aspartate 457 contribute to the active site. Ca(2+)-binding residues include asparagine 497, aspartate 499, glutamate 546, and glutamate 551. Residues 795 to 815 (SNAGGNSPLGETIPMASRGGA) are disordered.

The protein belongs to the transglutaminase superfamily. Transglutaminase family. As to quaternary structure, interacts with PLAAT4. Ca(2+) serves as cofactor. Palmitoylated. Post-translationally, the membrane anchorage region possesses a cluster of five cysteines within which fatty acid(s) may become thioester-linked. It is subject to phorbol ester-stimulated phosphorylation and is hypersensitive to proteolysis, which releases the enzyme in a soluble form. In terms of processing, tyrosine-phosphorylated.

The protein resides in the membrane. It carries out the reaction L-glutaminyl-[protein] + L-lysyl-[protein] = [protein]-L-lysyl-N(6)-5-L-glutamyl-[protein] + NH4(+). Functionally, catalyzes the cross-linking of proteins and the conjugation of polyamines to proteins. Responsible for cross-linking epidermal proteins during formation of the stratum corneum. Involved in cell proliferation. This chain is Protein-glutamine gamma-glutamyltransferase K (TGM1), found in Canis lupus familiaris (Dog).